The sequence spans 173 residues: Inorganic pyrophosphatase (173 aa).

Substrate is bound by residues Lys-29, Arg-43, and Tyr-55. Mg(2+) contacts are provided by Asp-65, Asp-70, and Asp-102. Position 141 (Tyr-141) interacts with substrate.

It belongs to the PPase family. Homohexamer. It depends on Mg(2+) as a cofactor.

The protein resides in the cytoplasm. The enzyme catalyses diphosphate + H2O = 2 phosphate + H(+). Functionally, catalyzes the hydrolysis of inorganic pyrophosphate (PPi) forming two phosphate ions. The protein is Inorganic pyrophosphatase of Rickettsia felis (strain ATCC VR-1525 / URRWXCal2) (Rickettsia azadi).